Consider the following 209-residue polypeptide: Protein-L-isoaspartate O-methyltransferase (209 aa).

Ser-55 is a catalytic residue.

The protein belongs to the methyltransferase superfamily. L-isoaspartyl/D-aspartyl protein methyltransferase family.

It localises to the cytoplasm. The enzyme catalyses [protein]-L-isoaspartate + S-adenosyl-L-methionine = [protein]-L-isoaspartate alpha-methyl ester + S-adenosyl-L-homocysteine. Catalyzes the methyl esterification of L-isoaspartyl residues in peptides and proteins that result from spontaneous decomposition of normal L-aspartyl and L-asparaginyl residues. It plays a role in the repair and/or degradation of damaged proteins. The chain is Protein-L-isoaspartate O-methyltransferase from Anaeromyxobacter dehalogenans (strain 2CP-1 / ATCC BAA-258).